Consider the following 450-residue polypeptide: Glucose-6-phosphate isomerase (450 aa).

Residue E291 is the Proton donor of the active site. Active-site residues include H312 and K426.

Belongs to the GPI family.

It localises to the cytoplasm. The enzyme catalyses alpha-D-glucose 6-phosphate = beta-D-fructose 6-phosphate. The protein operates within carbohydrate biosynthesis; gluconeogenesis. Its pathway is carbohydrate degradation; glycolysis; D-glyceraldehyde 3-phosphate and glycerone phosphate from D-glucose: step 2/4. In terms of biological role, catalyzes the reversible isomerization of glucose-6-phosphate to fructose-6-phosphate. This chain is Glucose-6-phosphate isomerase, found in Clostridium botulinum (strain Langeland / NCTC 10281 / Type F).